The following is a 468-amino-acid chain: METIKRTKIVDVLKSDAFGTTVNVKGWVRTRRGSKQVNFIALNDGSTINNVQIVVDVDKLGDEFLKPITTGASISVNGILTQSQGKGQSVEIQATEIEIFGTADPATYPLQKKGHSMEFLREIAHLRPRTNTFGAVFRIRHNMAYAIHKFFHDRGFFYFHTPIITASDCEGAGQMFQVTTKNLYDLKKDENGSIIYEDDFFGKQASLTVSGQLEGELAATALGQIYTFGPTFRAENSNTPRHLAEFWMIEPEVAFNDITDNMELAEEFIKYCVQWALDNCMEDIKFLNDMFDKELIARLEGVLKDSFVRLPYTEGIKILEEAVAKGHKFEFPVYWGVDLASEHERFLVEDHFKRPVILTDYPKEIKAFYMKQNEDGKTVRAMDVLFPKIGEIIGGSEREADYDKLMTRIDELGIPMKDMWWYLDTRRFGTVPHSGFGLGFERLLLFVTGMANIRDVIPFPRTPNNAEF.

This sequence belongs to the class-II aminoacyl-tRNA synthetase family. In terms of assembly, homodimer.

It is found in the cytoplasm. It carries out the reaction tRNA(Asn) + L-asparagine + ATP = L-asparaginyl-tRNA(Asn) + AMP + diphosphate + H(+). This Parabacteroides distasonis (strain ATCC 8503 / DSM 20701 / CIP 104284 / JCM 5825 / NCTC 11152) protein is Asparagine--tRNA ligase.